The following is a 159-amino-acid chain: Nascent polypeptide-associated complex subunit beta (159 aa).

2 disordered regions span residues 1 to 39 (MDME…GMDD) and 121 to 159 (ESYQ…DKVE). Basic residues predominate over residues 23-32 (TPRRKVKNVH). An NAC-A/B domain is found at 36-101 (GMDDKKLQTS…GEDKELTELV (66 aa)). Positions 136–153 (KDDDEDDDDIPDLVEGEN) are enriched in acidic residues.

The protein belongs to the NAC-beta family. Part of the nascent polypeptide-associated complex (NAC), consisting of EGD2 and EGD1. NAC associates with ribosomes via EGD1.

The protein resides in the cytoplasm. It localises to the nucleus. Component of the nascent polypeptide-associated complex (NAC), a dynamic component of the ribosomal exit tunnel, protecting the emerging polypeptides from interaction with other cytoplasmic proteins to ensure appropriate nascent protein targeting. The NAC complex also promotes mitochondrial protein import by enhancing productive ribosome interactions with the outer mitochondrial membrane and blocks the inappropriate interaction of ribosomes translating non-secretory nascent polypeptides with translocation sites in the membrane of the endoplasmic reticulum. EGD1 may act as a transcription factor that exert a negative effect on the expression of several genes that are transcribed by RNA polymerase II. The chain is Nascent polypeptide-associated complex subunit beta (egd1) from Botryotinia fuckeliana (strain B05.10) (Noble rot fungus).